The chain runs to 288 residues: Glutamate racemase (288 aa).

The interval 1 to 21 (MAIARQDVNISSPEATTSDAQ) is disordered. A compositionally biased stretch (polar residues) spans 8–21 (VNISSPEATTSDAQ). Residues 32 to 33 (DS) and 64 to 65 (YG) each bind substrate. Catalysis depends on C96, which acts as the Proton donor/acceptor. A substrate-binding site is contributed by 97–98 (NT). Residue C209 is the Proton donor/acceptor of the active site. Position 210–211 (210–211 (TH)) interacts with substrate.

The protein belongs to the aspartate/glutamate racemases family.

The enzyme catalyses L-glutamate = D-glutamate. It functions in the pathway cell wall biogenesis; peptidoglycan biosynthesis. In terms of biological role, provides the (R)-glutamate required for cell wall biosynthesis. The sequence is that of Glutamate racemase from Proteus mirabilis (strain HI4320).